The following is a 324-amino-acid chain: Olfactory receptor 7G2 (324 aa).

Residues 1–25 are Extracellular-facing; the sequence is MEARNQTAISKFLLLGLIEDPELQP. An N-linked (GlcNAc...) asparagine glycan is attached at N5. The chain crosses the membrane as a helical span at residues 26 to 46; sequence VLFSLFLSMYLVTILGNLLIL. The Cytoplasmic portion of the chain corresponds to 47 to 54; the sequence is LAVISDSH. A helical membrane pass occupies residues 55–75; it reads LHTPMYFFLSNLSFLDICLST. Residues 76 to 99 are Extracellular-facing; sequence TTIPKMLVNIQAQNRSITYSGCLT. N-linked (GlcNAc...) asparagine glycosylation occurs at N89. C97 and C189 are joined by a disulfide. Residues 100-120 form a helical membrane-spanning segment; it reads QICFVLFFAGLENCLLAAMAY. The Cytoplasmic portion of the chain corresponds to 121–139; sequence DRYVAICHPLRYTVIMNPR. The helical transmembrane segment at 140-160 threads the bilayer; that stretch reads LCGLLILLSLLTSVVNALLLS. Over 161–197 the chain is Extracellular; that stretch reads LMVLRLSFCTDLEIPLFFCELAQVIQLTCSDTLINNI. Residues 198-217 form a helical membrane-spanning segment; sequence LIYFAACIFGGVPLSGIILS. Residues 218-237 lie on the Cytoplasmic side of the membrane; sequence YTQITSCVLRMPSASGKHKA. The helical transmembrane segment at 238-258 threads the bilayer; it reads VSTCGSHLSIVLLFYGAGLGV. The Extracellular segment spans residues 259–271; the sequence is YISSVVTDSPRKT. Residues 272–292 form a helical membrane-spanning segment; sequence AVASVMYSVFPQMVNPFIYSL. Residues 293–324 are Cytoplasmic-facing; sequence RNKDMKGTLRKFIGRIPSLLWCAICFGFRFLE.

It belongs to the G-protein coupled receptor 1 family.

It is found in the cell membrane. In terms of biological role, odorant receptor. In Homo sapiens (Human), this protein is Olfactory receptor 7G2 (OR7G2).